Consider the following 423-residue polypeptide: Cyclin-B2-1 (423 aa).

The segment at 1 to 61 (MDRASENRRL…EKSGKEEQKP (61 aa)) is disordered. Positions 49–60 (PMLEKSGKEEQK) are enriched in basic and acidic residues.

It belongs to the cyclin family. Cyclin AB subfamily. In terms of assembly, interacts with CDKB2-1. In terms of tissue distribution, expressed in the intercalary meristem and the elongation zone of internodes. Expressed in adventitious roots at all nodes under submergence conditions.

Involved in the control of the cell cycle at the G2/M (mitosis) transition. May activate CDKB2-1 kinase. The polypeptide is Cyclin-B2-1 (CYCB2-1) (Oryza sativa subsp. indica (Rice)).